A 447-amino-acid chain; its full sequence is Glutamate--tRNA ligase 1 (447 aa).

Residues P10–N20 carry the 'HIGH' region motif. Positions K240–R244 match the 'KMSKS' region motif. K243 provides a ligand contact to ATP.

The protein belongs to the class-I aminoacyl-tRNA synthetase family. Glutamate--tRNA ligase type 1 subfamily. As to quaternary structure, monomer.

It is found in the cytoplasm. It catalyses the reaction tRNA(Glu) + L-glutamate + ATP = L-glutamyl-tRNA(Glu) + AMP + diphosphate. In terms of biological role, catalyzes the attachment of glutamate to tRNA(Glu) in a two-step reaction: glutamate is first activated by ATP to form Glu-AMP and then transferred to the acceptor end of tRNA(Glu). In Rickettsia massiliae (strain Mtu5), this protein is Glutamate--tRNA ligase 1.